The primary structure comprises 92 residues: Small ribosomal subunit protein uS19 (92 aa).

This sequence belongs to the universal ribosomal protein uS19 family.

In terms of biological role, protein S19 forms a complex with S13 that binds strongly to the 16S ribosomal RNA. The polypeptide is Small ribosomal subunit protein uS19 (Buchnera aphidicola subsp. Acyrthosiphon pisum (strain 5A)).